The chain runs to 292 residues: Tyrosine isonitrile desaturase (292 aa).

Fe cation contacts are provided by H110, D112, and H259.

Belongs to the TfdA dioxygenase family. Fe(2+) is required as a cofactor.

It catalyses the reaction (2S)-3-(4-hydroxyphenyl)-2-isocyanopropanoate + 2-oxoglutarate + O2 = (2E)-3-(4-hydroxyphenyl)-2-isocyanoprop-2-enoate + succinate + CO2 + H2O. In terms of biological role, catalyzes the 2-oxoglutarate-dependent oxidation of tyrosine isonitrile. This is Tyrosine isonitrile desaturase from Erwinia amylovora (strain CFBP1430).